The chain runs to 61 residues: Small ribosomal subunit protein uS14 (61 aa).

The Zn(2+) site is built by C24, C27, C40, and C43.

The protein belongs to the universal ribosomal protein uS14 family. Zinc-binding uS14 subfamily. As to quaternary structure, part of the 30S ribosomal subunit. Contacts proteins S3 and S10. It depends on Zn(2+) as a cofactor.

In terms of biological role, binds 16S rRNA, required for the assembly of 30S particles and may also be responsible for determining the conformation of the 16S rRNA at the A site. In Brevibacillus brevis (strain 47 / JCM 6285 / NBRC 100599), this protein is Small ribosomal subunit protein uS14.